Consider the following 581-residue polypeptide: DNA polymerase alpha subunit B (581 aa).

Belongs to the DNA polymerase alpha subunit B family. As to quaternary structure, DNA polymerase alpha:primase is a four subunit enzyme complex, which is assembled throughout the cell cycle, and consists of the two DNA polymerase subunits A and B, and the DNA primase large and small subunits. Subunit B binds to subunit A.

It localises to the nucleus. In terms of biological role, may play an essential role at the early stage of chromosomal DNA replication by coupling the polymerase alpha/primase complex to the cellular replication machinery. Required for the distribution of pie-1 in cell divsion. In Caenorhabditis elegans, this protein is DNA polymerase alpha subunit B (div-1).